A 157-amino-acid chain; its full sequence is Small ribosomal subunit protein uS17 (157 aa).

The protein belongs to the universal ribosomal protein uS17 family.

This is Small ribosomal subunit protein uS17 (RPS11) from Dunaliella tertiolecta (Green alga).